The following is a 992-amino-acid chain: Disks large-associated protein 1 (992 aa).

2 disordered regions span residues 154–209 (SLEG…SWWS) and 355–375 (KAMG…SPKV). Ser-169 carries the phosphoserine modification. The segment covering 195–209 (SNASNASPTSPSWWS) has biased composition (low complexity). Phosphoserine occurs at positions 362, 365, 368, 372, 389, 418, 421, 425, 428, 437, 509, 516, and 578. Thr-579 carries the post-translational modification Phosphothreonine. Phosphoserine occurs at positions 581 and 605. Thr-606 bears the Phosphothreonine mark. Phosphoserine occurs at positions 608 and 611. Interaction with DYL2 regions lie at residues 665 to 676 (LSIGIQVDDAEE) and 687 to 698 (SKFQSVGVQVEE). The segment at 914–980 (WKQMDPLDKK…QNSATESAES (67 aa)) is disordered. Composition is skewed to basic and acidic residues over residues 918–927 (DPLDKKERRA) and 943–958 (IRER…EARK). Ser-947 carries the phosphoserine modification. The span at 969–978 (VRQNSATESA) shows a compositional bias: polar residues. The PDZ-binding motif lies at 990–992 (TRL).

The protein belongs to the SAPAP family. As to quaternary structure, interacts with guanylate kinase-like domain of DLG1, DLG2, DLG3, DLG4 and AIP1. Interacts with the PDZ domain of SHANK1, SHANK2 and SHANK3. Found in a complex with DLG4 and SHANK1, SHANK2 or SHANK3. Found in a complex with DLG4 and BEGAIN. Interacts with DYL2 and LRFN1. Interacts with MPP2 (via the SH3-Guanylate kinase-like sub-module). Ubiquitinated by TRIM3; leading to proteasomal degradation. As to expression, expressed in brain and testis.

It localises to the cell membrane. Its subcellular location is the postsynaptic density. The protein resides in the synapse. Its function is as follows. Part of the postsynaptic scaffold in neuronal cells. This chain is Disks large-associated protein 1, found in Rattus norvegicus (Rat).